A 2335-amino-acid chain; its full sequence is uncharacterized protein (2335 aa).

A run of 6 helical transmembrane segments spans residues 114–134 (FMIG…AHII), 148–167 (FISG…SIVF), 172–194 (VVIP…IVKY), 214–234 (IFFL…PFLS), 255–275 (EFGF…LSLL), and 307–327 (FVNL…IAYF). The segment covering 1043 to 1052 (ATSESISFNQ) has biased composition (polar residues). Residues 1043 to 1064 (ATSESISFNQTKEKSNSTLGRL) are disordered. Coiled-coil stretches lie at residues 1174 to 1202 (VTLK…MKEA) and 1417 to 1447 (KKRE…EKIV). Residues 1458–1471 (QTSQLTKNSFNPSR) are compositionally biased toward polar residues. Residues 1458–1479 (QTSQLTKNSFNPSRQKTDKNLE) are disordered. The helical transmembrane segment at 2086–2106 (VWFPSGSLSQQVLPVHYIYVF) threads the bilayer. The tract at residues 2200 to 2222 (KQEKRILKSKQRRKITDSKQSTE) is disordered.

This sequence belongs to the ycf78 family.

Its subcellular location is the plastid. The protein resides in the chloroplast membrane. This is an uncharacterized protein from Tetradesmus obliquus (Green alga).